The chain runs to 332 residues: UPF0194 membrane protein YbhG (332 aa).

The first 16 residues, Met1–Ala16, serve as a signal peptide directing secretion. Residues Asn107 to Ala209 adopt a coiled-coil conformation.

Belongs to the UPF0194 family.

The protein localises to the periplasm. The chain is UPF0194 membrane protein YbhG from Escherichia coli (strain K12 / MC4100 / BW2952).